Here is a 337-residue protein sequence, read N- to C-terminus: ELAV-like protein 1-A (337 aa).

3 consecutive RRM domains span residues 20–109 (TNLI…FARP), 117–197 (ANLY…FAAN), and 255–333 (WCIF…FKTS).

The protein belongs to the RRM elav family. In terms of assembly, interacts (via RRM3) with cirbp. Unable to form oligomers. Part of a ribonucleoprotein (RNP) complex, at least composed of elavl1/elrA and/or elavl2/elrB, igf2bp3/vg1RBP, ddx6/Xp54, ybx2/frgy2, lsm14b/rap55b and, in a subset of RNP complexes, stau1/staufen. As to expression, ubiquitously expressed in adults.

Its subcellular location is the cytoplasm. It is found in the cell cortex. Its function is as follows. RNA-binding protein that binds to the 3'-UTR region of mRNAs and increases their stability. Involved in embryonic stem cells (ESCs) differentiation: preferentially binds mRNAs that are not methylated by N6-methyladenosine (m6A), stabilizing them, promoting ESCs differentiation. Binds to poly-U elements and AU-rich elements (AREs) in the 3'-UTR of target mRNAs. May be involved in cytoplasmic mRNA polyadenylation. Acts cooperatively with cribp to stabilize AU-rich sequence (ARE)-containing mRNAs. May play a role during gastrulation. Required for the vegetal localization of vg1 mRNA. The polypeptide is ELAV-like protein 1-A (elavl1-a) (Xenopus laevis (African clawed frog)).